The sequence spans 340 residues: MNLTGKKVILHDMSLRDGMHARQHQITLKEMVDVATGLDAAGVPLIEVTHGDGLGGASLNYGFPAHTDEEYLSAVIPKMKQAKVSALLLPGIGTVDHLRMAHQLGVNTIRVATHCTEADVSGQHIALSRDLGLDTVGFLMMAHMVSPEKLLEQAKLMESYGANCIYCTDSAGYMLPGDVTSHIERLRGELKSDTQIGFHGHHNMGMSIANSLAAIEAGAERIDGSVAGLGAGAGNTPLEVFVAVLERMQVHHGVNLYDIMDVAEDLVTPMMDQPIRIDRDALTLGYAGVYSSFLLFAQRAEKKYGVPARDILLELGRRGTVGGQEDMIDDTAMNMARELA.

The 253-residue stretch at 8-260 (VILHDMSLRD…HHGVNLYDIM (253 aa)) folds into the Pyruvate carboxyltransferase domain. Position 16–17 (16–17 (RD)) interacts with substrate. D17 is a Mn(2+) binding site. Residue H20 is the Proton acceptor of the active site. Substrate-binding residues include S170 and H199. The Mn(2+) site is built by H199 and H201. Y290 contributes to the substrate binding site.

It belongs to the 4-hydroxy-2-oxovalerate aldolase family.

The enzyme catalyses (S)-4-hydroxy-2-oxopentanoate = acetaldehyde + pyruvate. This Shewanella halifaxensis (strain HAW-EB4) protein is 4-hydroxy-2-oxovalerate aldolase.